The following is a 1150-amino-acid chain: Pesticidal crystal protein Cry9Ea (1150 aa).

This sequence belongs to the delta endotoxin family.

Its function is as follows. Promotes colloidosmotic lysis by binding to the midgut epithelial cells of insects. The chain is Pesticidal crystal protein Cry9Ea (cry9Ea) from Bacillus thuringiensis subsp. aizawai.